The primary structure comprises 275 residues: Large ribosomal subunit protein uL2 (275 aa).

The segment covering 35–49 (DSQSSTAGRNNNGRI) has biased composition (polar residues). Disordered stretches follow at residues 35 to 59 (DSQS…GGHK) and 224 to 275 (AMNP…RHKR). Residues 50 to 59 (TTRHKGGGHK) are compositionally biased toward basic residues.

Belongs to the universal ribosomal protein uL2 family. Part of the 50S ribosomal subunit. Forms a bridge to the 30S subunit in the 70S ribosome.

Its function is as follows. One of the primary rRNA binding proteins. Required for association of the 30S and 50S subunits to form the 70S ribosome, for tRNA binding and peptide bond formation. It has been suggested to have peptidyltransferase activity; this is somewhat controversial. Makes several contacts with the 16S rRNA in the 70S ribosome. The chain is Large ribosomal subunit protein uL2 from Burkholderia cenocepacia (strain HI2424).